The following is a 314-amino-acid chain: MSVLDQNAVDINPRISEAEVGDYIALLKPRVMSLVIFTALVGMAMAPGHFHPVLAITSLLCIAVGAGASGALNMALEGDIDAKMSRTANRPIPRGRITRPEAMTFGMTLAFFSVMTLGILVNWIAGALLAFTIFFYVVIYTMWLKRWTAQNIVIGGAAGALPPVVAWAAVTGTVDVEPLLLFAIIFFWTPPHFWALALFRSDDYARAGIPMLPNVAGPDATRLQILLYTIVLIAVAAAPWALGYFDAVYGVVSLILGAGMLVLAINVYMRRERSQSLRATRKLFAFSILYLFALFATLLAEVVFRALAPMAGGA.

Helical transmembrane passes span Val31–His51, Pro52–Leu72, Ile119–Ile139, Ile152–Gly172, Leu179–Phe199, Ile225–Phe245, Ala247–Val267, and Phe284–Phe304.

This sequence belongs to the UbiA prenyltransferase family. Protoheme IX farnesyltransferase subfamily.

The protein resides in the cell inner membrane. The enzyme catalyses heme b + (2E,6E)-farnesyl diphosphate + H2O = Fe(II)-heme o + diphosphate. Its pathway is porphyrin-containing compound metabolism; heme O biosynthesis; heme O from protoheme: step 1/1. In terms of biological role, converts heme B (protoheme IX) to heme O by substitution of the vinyl group on carbon 2 of heme B porphyrin ring with a hydroxyethyl farnesyl side group. This Bradyrhizobium diazoefficiens (strain JCM 10833 / BCRC 13528 / IAM 13628 / NBRC 14792 / USDA 110) protein is Protoheme IX farnesyltransferase.